We begin with the raw amino-acid sequence, 500 residues long: Maturase K (500 aa).

This sequence belongs to the intron maturase 2 family. MatK subfamily.

It localises to the plastid. Its subcellular location is the chloroplast. Its function is as follows. Usually encoded in the trnK tRNA gene intron. Probably assists in splicing its own and other chloroplast group II introns. The polypeptide is Maturase K (Adiantum capillus-veneris (Maidenhair fern)).